We begin with the raw amino-acid sequence, 245 residues long: Phycocyanobilin:ferredoxin oxidoreductase (245 aa).

The protein belongs to the HY2 family.

It carries out the reaction (2R,3Z)-phycocyanobilin + 4 oxidized [2Fe-2S]-[ferredoxin] = biliverdin IXalpha + 4 reduced [2Fe-2S]-[ferredoxin] + 4 H(+). Functionally, catalyzes the four-electron reduction of biliverdin IX-alpha (2-electron reduction at both the A and D rings); the reaction proceeds via an isolatable 2-electron intermediate, 181,182-dihydrobiliverdin. The protein is Phycocyanobilin:ferredoxin oxidoreductase of Gloeothece citriformis (strain PCC 7424) (Cyanothece sp. (strain PCC 7424)).